Here is a 317-residue protein sequence, read N- to C-terminus: Ribosomal protein L11 methyltransferase (317 aa).

S-adenosyl-L-methionine-binding residues include threonine 158, glycine 179, aspartate 201, and asparagine 244.

This sequence belongs to the methyltransferase superfamily. PrmA family.

The protein localises to the cytoplasm. It catalyses the reaction L-lysyl-[protein] + 3 S-adenosyl-L-methionine = N(6),N(6),N(6)-trimethyl-L-lysyl-[protein] + 3 S-adenosyl-L-homocysteine + 3 H(+). In terms of biological role, methylates ribosomal protein L11. The polypeptide is Ribosomal protein L11 methyltransferase (Streptococcus pyogenes serotype M3 (strain ATCC BAA-595 / MGAS315)).